The primary structure comprises 191 residues: Transcription factor FapR (191 aa).

The MaoC-like domain maps to 102–169 (GIARGHHLFA…RILVTSHVNQ (68 aa)).

The protein belongs to the FapR family.

Functionally, transcriptional factor involved in regulation of membrane lipid biosynthesis by repressing genes involved in fatty acid and phospholipid metabolism. This is Transcription factor FapR from Shouchella clausii (strain KSM-K16) (Alkalihalobacillus clausii).